Reading from the N-terminus, the 379-residue chain is Cytochrome b (379 aa).

A run of 4 helical transmembrane segments spans residues 33-53 (FGSL…FLAM), 77-98 (WLIR…FIHV), 113-133 (WNIG…GYVL), and 178-198 (FFAF…VHLL). Residues His-83 and His-97 each contribute to the heme b site. The heme b site is built by His-182 and His-196. His-201 serves as a coordination point for a ubiquinone. 4 helical membrane-spanning segments follow: residues 226–246 (IKDL…ALFF), 288–308 (LGGV…PLLN), 320–340 (VTQT…WIGG), and 347–367 (FTTI…ILIP).

This sequence belongs to the cytochrome b family. As to quaternary structure, the cytochrome bc1 complex contains 11 subunits: 3 respiratory subunits (MT-CYB, CYC1 and UQCRFS1), 2 core proteins (UQCRC1 and UQCRC2) and 6 low-molecular weight proteins (UQCRH/QCR6, UQCRB/QCR7, UQCRQ/QCR8, UQCR10/QCR9, UQCR11/QCR10 and a cleavage product of UQCRFS1). This cytochrome bc1 complex then forms a dimer. Requires heme b as cofactor.

It localises to the mitochondrion inner membrane. Its function is as follows. Component of the ubiquinol-cytochrome c reductase complex (complex III or cytochrome b-c1 complex) that is part of the mitochondrial respiratory chain. The b-c1 complex mediates electron transfer from ubiquinol to cytochrome c. Contributes to the generation of a proton gradient across the mitochondrial membrane that is then used for ATP synthesis. The protein is Cytochrome b (MT-CYB) of Akodon lindberghi (Lindbergh's grass mouse).